Here is a 784-residue protein sequence, read N- to C-terminus: E3 UFM1-protein ligase 1 homolog (784 aa).

The tract at residues 405–480 (SVSTQELEDD…RGGGAGNKKA (76 aa)) is disordered. The span at 444–454 (KSTKKHQRGKA) shows a compositional bias: basic residues.

The protein belongs to the UFL1 family.

Its function is as follows. E3 UFM1-protein ligase that mediates ufmylation of target proteins. This is E3 UFM1-protein ligase 1 homolog from Drosophila yakuba (Fruit fly).